The primary structure comprises 337 residues: Anthranilate phosphoribosyltransferase (337 aa).

5-phospho-alpha-D-ribose 1-diphosphate is bound by residues Gly-81, 84–85 (GD), Ser-89, 91–94 (NVST), 109–117 (KHGNRALSS), and Ala-121. Anthranilate is bound at residue Gly-81. Ser-93 lines the Mg(2+) pocket. Asn-112 lines the anthranilate pocket. Arg-167 contacts anthranilate. Mg(2+) contacts are provided by Asp-226 and Glu-227.

It belongs to the anthranilate phosphoribosyltransferase family. Homodimer. Requires Mg(2+) as cofactor.

The catalysed reaction is N-(5-phospho-beta-D-ribosyl)anthranilate + diphosphate = 5-phospho-alpha-D-ribose 1-diphosphate + anthranilate. It functions in the pathway amino-acid biosynthesis; L-tryptophan biosynthesis; L-tryptophan from chorismate: step 2/5. Its function is as follows. Catalyzes the transfer of the phosphoribosyl group of 5-phosphorylribose-1-pyrophosphate (PRPP) to anthranilate to yield N-(5'-phosphoribosyl)-anthranilate (PRA). The polypeptide is Anthranilate phosphoribosyltransferase (Bradyrhizobium sp. (strain BTAi1 / ATCC BAA-1182)).